The chain runs to 667 residues: Probable potassium transport system protein Kup (667 aa).

A run of 12 helical transmembrane segments spans residues 16 to 36, 58 to 78, 101 to 121, 146 to 166, 167 to 187, 221 to 241, 253 to 273, 294 to 314, 343 to 363, 373 to 393, 399 to 419, and 431 to 451; these read GFIIALGIVYGDIGTSPLYTM, VSLIIWTLTLITTIKYVLIAL, WLIIPAMLGGATLLSDGALTP, TNVILTTLLILMVLFGLQRFG, TGVIGKLFGPVMLVWFSVLGI, IFILGSIFLATTGAEALYSDL, WPFVKVCIILSYCGQAAWILA, VYLVILATLAAIIASQALISG, LYIPVINWSLFAVTSCTVLYF, YGLAITITMLMTTILLAYYLI, PLLASLLMAFFAFIEFIFFLA, and VVVLALAIVFVMVIWHAGTVI.

It belongs to the HAK/KUP transporter (TC 2.A.72) family.

The protein localises to the cell membrane. It catalyses the reaction K(+)(in) + H(+)(in) = K(+)(out) + H(+)(out). Functionally, transport of potassium into the cell. Likely operates as a K(+):H(+) symporter. The polypeptide is Probable potassium transport system protein Kup (Streptococcus equi subsp. zooepidemicus (strain MGCS10565)).